We begin with the raw amino-acid sequence, 373 residues long: StAR-related lipid transfer protein 7, mitochondrial (373 aa).

Residues 1-61 constitute a mitochondrion transit peptide; that stretch reads MFPRRPPATL…YSESSRCALL (61 aa). A coiled-coil region spans residues 89-114; it reads DEERIQEEELQRSINEMKRLEEMSNI. In terms of domain architecture, START spans 115 to 330; it reads FQSSGVENYP…LHMATLKAKN (216 aa). Disordered stretches follow at residues 118–141 and 347–373; these read SGVE…KDKE and SSEA…IEYA.

Post-translationally, proteolytically cleaved by PARL. In terms of tissue distribution, expressed in epithelial cells of airways, peripheral bronchioles and alveoli, as well as in the basal cell layer of the epidermis (at protein level).

The protein localises to the mitochondrion. Functionally, may play a protective role in mucosal tissues by preventing exaggerated allergic responses. This chain is StAR-related lipid transfer protein 7, mitochondrial (Stard7), found in Mus musculus (Mouse).